A 281-amino-acid polypeptide reads, in one-letter code: Arabinooligosaccharides transport system permease protein AraQ (281 aa).

6 helical membrane-spanning segments follow: residues 15-35, 81-101, 112-132, 142-162, 185-205, and 247-267; these read LTLF…CLLL, LVLG…IGYG, IIFV…MLPL, IDSY…VFFF, FGIF…AMII, and MLIS…LFFQ. An ABC transmembrane type-1 domain is found at 77–266; that stretch reads FFNSLVLGLF…LPVIIIFLFF (190 aa).

Belongs to the binding-protein-dependent transport system permease family. MalFG subfamily. The complex is composed of two ATP-binding proteins (MsmX), two transmembrane proteins (AraP and AraQ) and a solute-binding protein (AraN).

The protein localises to the cell membrane. Part of the ABC transporter complex AraNPQ involved in the uptake of arabinooligosaccharides. Transports alpha-1,5-arabinooligosaccharides, at least up to four L-arabinosyl units. Responsible for the translocation of the substrate across the membrane. This is Arabinooligosaccharides transport system permease protein AraQ from Bacillus subtilis (strain 168).